The chain runs to 236 residues: 2-C-methyl-D-erythritol 4-phosphate cytidylyltransferase (236 aa).

This sequence belongs to the IspD/TarI cytidylyltransferase family. IspD subfamily. In terms of assembly, homodimer.

The enzyme catalyses 2-C-methyl-D-erythritol 4-phosphate + CTP + H(+) = 4-CDP-2-C-methyl-D-erythritol + diphosphate. It functions in the pathway isoprenoid biosynthesis; isopentenyl diphosphate biosynthesis via DXP pathway; isopentenyl diphosphate from 1-deoxy-D-xylulose 5-phosphate: step 2/6. Catalyzes the formation of 4-diphosphocytidyl-2-C-methyl-D-erythritol from CTP and 2-C-methyl-D-erythritol 4-phosphate (MEP). This Buchnera aphidicola subsp. Schizaphis graminum (strain Sg) protein is 2-C-methyl-D-erythritol 4-phosphate cytidylyltransferase.